We begin with the raw amino-acid sequence, 541 residues long: EH domain-containing protein 4 (541 aa).

M1 carries the post-translational modification N-acetylmethionine. The Dynamin-type G domain occupies 58–289 (FENKPMILLV…DLFRDIQSLP (232 aa)). Residues 68 to 75 (GQYSTGKT) are G1 motif. ATP is bound at residue 68-75 (GQYSTGKT). The tract at residues 94-95 (EP) is G2 motif. Positions 156 to 159 (DSPG) are G3 motif. The residue at position 162 (S162) is a Phosphoserine. The G4 motif stretch occupies residues 222-225 (NKAD). K223 provides a ligand contact to ATP. Residue V246 is a region of interest, G5 motif. W261 contacts ATP. Residues 447–535 (DKPVYDELFY…PHLVPPSHRK (89 aa)) form the EH domain. A Phosphotyrosine modification is found at Y451. S459 carries the post-translational modification Phosphoserine. Residues 479-514 (LPNSVLGKIWKLADCDCDGMLDEEEFALAKHLIKIK) form the EF-hand domain. D492, D494, D496, M498, and E503 together coordinate Ca(2+).

Belongs to the TRAFAC class dynamin-like GTPase superfamily. Dynamin/Fzo/YdjA family. EHD subfamily. In terms of assembly, homooligomer, and heterooligomer with EHD1, EHD2 and EHD3. Forms a complex with EHD4 and MICALL1; the complex controls CDH5 trafficking and coordinates angiogenesis. Highly expressed in pancreas and heart.

Its subcellular location is the early endosome membrane. The protein localises to the recycling endosome membrane. The protein resides in the cell membrane. It is found in the cell junction. It localises to the adherens junction. Functionally, ATP- and membrane-binding protein that probably controls membrane reorganization/tubulation upon ATP hydrolysis. Plays a role in early endosomal transport. During sprouting angiogenesis, in complex with PACSIN2 and MICALL1, forms recycling endosome-like tubular structure at asymmetric adherens junctions to control CDH5 trafficking. The chain is EH domain-containing protein 4 from Homo sapiens (Human).